The following is a 446-amino-acid chain: Eukaryotic translation initiation factor 3 subunit E (446 aa).

The PCI domain occupies 240–420; it reads PLFNDENSRE…GTVVMNHPNS (181 aa).

The protein belongs to the eIF-3 subunit E family. In terms of assembly, component of the eukaryotic translation initiation factor 3 (eIF-3) complex.

It localises to the cytoplasm. Component of the eukaryotic translation initiation factor 3 (eIF-3) complex, which is involved in protein synthesis of a specialized repertoire of mRNAs and, together with other initiation factors, stimulates binding of mRNA and methionyl-tRNAi to the 40S ribosome. The eIF-3 complex specifically targets and initiates translation of a subset of mRNAs involved in cell proliferation. The chain is Eukaryotic translation initiation factor 3 subunit E from Pyricularia oryzae (strain 70-15 / ATCC MYA-4617 / FGSC 8958) (Rice blast fungus).